The sequence spans 579 residues: MLNRAMENSDMKRNSSTLLDLPVVKSSLVVEAIHMSRKKLGWYNESRRDSETVKARVEAGLSEVKKSVEELALLIKRSNRSAGFQEKDMEVLKMEEKYAEVMRVLEVVKEEVSRVKLDVSSVLIERVAAEEKVEELRFKTEGGLRLLESLKKEIEVANEEHLMVALGKIEALKGYKEIERQREGKAIKVLDLLVERNKRIKNMLEEAERSKDIEIELFETSTDVEMLETQLKLFKKMERRVQGRDSSSMSRSNRSFGRGKYSLSVLKEVTEGKKEELASVKVEIFRVMTVMDALRNEIIRARDETACLGKILREDDVKIEKLNSKILIEKSKLEVVSIAEERISSLAENFVGSLEKIKKSRNAAKKEEFLFKEEKTVTKAETQKTKLDIDKKESELNSKLDELEKVKHTEALVLEKLESLVEDMMESREMESEHCSTITISRFEYEYLSKHASQAEETAEKKVAAAAAWVEALKASTKSFLMKTETLMRESEMTKAEEEREVFRMERSLSTKRLVEGEIQKIKRNSEAEGYISPKPVGKFTPVQRGKPRRYSSVGTPTFFVIKKKKKVPRLAKFFSRRS.

Coiled-coil stretches lie at residues 90-161, 188-216, 383-419, and 481-501; these read EVLK…NEEH, KVLDLLVERNKRIKNMLEEAERSKDIEIE, QKTKLDIDKKESELNSKLDELEKVKHTEALVLEKLES, and LMKTETLMRESEMTKAEEERE.

Belongs to the WEB family.

Required for the chloroplast avoidance response under high intensity blue light. This avoidance response consists in the relocation of chloroplasts on the anticlinal side of exposed cells. The chain is Protein PLASTID MOVEMENT IMPAIRED 15 (PMI15) from Arabidopsis thaliana (Mouse-ear cress).